A 74-amino-acid polypeptide reads, in one-letter code: Molt-inhibiting hormone (74 aa).

Q1 is modified (pyrrolidone carboxylic acid). Cystine bridges form between C7–C43, C23–C39, and C26–C52. V72 is subject to Valine amide.

It is found in the secreted. In terms of biological role, inhibits Y-organs where molting hormone (ecdysteroid) is secreted. A molting cycle is initiated when MIH secretion diminishes or stops. The sequence is that of Molt-inhibiting hormone from Procambarus bouvieri (Mexican crayfish).